An 895-amino-acid chain; its full sequence is Collagen alpha-1(I) chain (895 aa).

Residues 1-895 (GPMGPSGPRG…PGPIGPPGPR (895 aa)) are disordered. Residues 20-39 (PQGFQGPPGEPGEPGASGPM) show a composition bias toward low complexity. Positions 51 to 65 (NGDDGEAGKPGRPGE) are enriched in basic and acidic residues. Serine 90 bears the Phosphoserine mark. 2 stretches are compositionally biased toward low complexity: residues 98–114 (DAGPAGPKGEPGSPGEN) and 137–150 (PAGARGNDGATGAA). Over residues 152-164 (PPGPTGPAGPPGF) the composition is skewed to pro residues. 6 stretches are compositionally biased toward low complexity: residues 198–237 (AGAAGPAGNPGADGQPGAKGANGAPGIAGAPGFPGARGPS), 302–336 (ERGFPGADGVAGPKGPAGERGAPGPAGPKGSPGEA), 348–374 (KGITGSPGSPGPDGKTGPPGPAGQDGR), 383–399 (ARGQAGVMGFPGPKGAA), 553–564 (TGPSGPAGPTGA), and 575–593 (AGFAGPPGADGQPGAKGDA). Residue serine 556 is modified to Phosphoserine. Pro residues predominate over residues 595–607 (PPGPAGPAGPPGP). 3 stretches are compositionally biased toward low complexity: residues 608-635 (IGSVGAPGPKGSAGPPGATGFPGAAGRV), 660-669 (ETGPAGRPGE), and 679-703 (AGEKGSPGADGPAGAPGTPGPQGIA). Positions 741–751 (PPGPVGPPGIA) are enriched in pro residues. Over residues 753 to 768 (PPGESGREGSPGAEGS) the composition is skewed to low complexity. Positions 787–802 (AGPPGAPGAPGAPGPV) are enriched in pro residues. Low complexity-rich tracts occupy residues 823-838 (IGPVGARGPAGPQGPR) and 853-886 (PGEQGPSGASGPAGPRGPPGSAGAPGKDGINGIP).

It belongs to the fibrillar collagen family. As to quaternary structure, trimers of one alpha 2(I) and two alpha 1(I) chains. Prolines at the third position of the tripeptide repeating unit (G-X-Y) are hydroxylated in some or all of the chains. In terms of tissue distribution, forms the fibrils of tendon, ligaments and bones. In bones, the fibrils are mineralized with calcium hydroxyapatite.

It localises to the secreted. It is found in the extracellular space. The protein localises to the extracellular matrix. In terms of biological role, type I collagen is a member of group I collagen (fibrillar forming collagen). The protein is Collagen alpha-1(I) chain of Equus sp.